A 598-amino-acid chain; its full sequence is Probable ATP-dependent RNA helicase DDX52 (598 aa).

An N6-acetyllysine modification is found at K15. S39 carries the post-translational modification Phosphoserine. Residues Q166–M194 carry the Q motif motif. The Helicase ATP-binding domain occupies I197–V375. A210–T217 serves as a coordination point for ATP. The DEAD box signature appears at D319–D322. In terms of domain architecture, Helicase C-terminal spans T386–Q547.

The protein belongs to the DEAD box helicase family. DDX52/ROK1 subfamily.

It is found in the nucleus. Its subcellular location is the nucleolus. It catalyses the reaction ATP + H2O = ADP + phosphate + H(+). In terms of biological role, required for efficient ribosome biogenesis. May control cell cycle progression by regulating translation of mRNAs that contain a terminal oligo pyrimidine (TOP) motif in their 5' UTRs, such as GTPBP4. The sequence is that of Probable ATP-dependent RNA helicase DDX52 (Ddx52) from Mus musculus (Mouse).